The sequence spans 262 residues: Ankyrin repeat domain-containing protein 7 (262 aa).

5 ANK repeats span residues 67-96 (KYRT…KINI), 100-129 (ENKS…DPNL), 133-162 (RYNT…DLEA), 166-195 (DGYT…DVNA), and 199-228 (YQRT…ELSC).

This chain is Ankyrin repeat domain-containing protein 7 (ANKRD7), found in Macaca fascicularis (Crab-eating macaque).